The following is a 204-amino-acid chain: Tat proofreading chaperone DmsD (204 aa).

This sequence belongs to the TorD/DmsD family. DmsD subfamily.

Its function is as follows. Required for biogenesis/assembly of DMSO reductase, but not for the interaction of the DmsA signal peptide with the Tat system. May be part of a chaperone cascade complex that facilitates a folding-maturation pathway for the substrate protein. The chain is Tat proofreading chaperone DmsD from Escherichia coli O157:H7.